The sequence spans 117 residues: Large ribosomal subunit protein uL18 (117 aa).

It belongs to the universal ribosomal protein uL18 family. Part of the 50S ribosomal subunit; part of the 5S rRNA/L5/L18/L25 subcomplex. Contacts the 5S and 23S rRNAs.

Its function is as follows. This is one of the proteins that bind and probably mediate the attachment of the 5S RNA into the large ribosomal subunit, where it forms part of the central protuberance. This chain is Large ribosomal subunit protein uL18, found in Sphingopyxis alaskensis (strain DSM 13593 / LMG 18877 / RB2256) (Sphingomonas alaskensis).